The primary structure comprises 245 residues: Adenosylcobinamide-GDP ribazoletransferase (245 aa).

The next 5 helical transmembrane spans lie at 31-51 (LLHYPAVGLFLGALLWLAALL), 57-77 (PLLQAALLLALWVALTGALHL), 109-129 (VAVVVLVIMLLLKFSALLVVL), 134-154 (PAALVLAPLLGRAALLALFLC), and 176-196 (ALMVLALVVIGCLLLGATGLL).

Belongs to the CobS family. The cofactor is Mg(2+).

Its subcellular location is the cell inner membrane. The catalysed reaction is alpha-ribazole + adenosylcob(III)inamide-GDP = adenosylcob(III)alamin + GMP + H(+). It carries out the reaction alpha-ribazole 5'-phosphate + adenosylcob(III)inamide-GDP = adenosylcob(III)alamin 5'-phosphate + GMP + H(+). Its pathway is cofactor biosynthesis; adenosylcobalamin biosynthesis; adenosylcobalamin from cob(II)yrinate a,c-diamide: step 7/7. Its function is as follows. Joins adenosylcobinamide-GDP and alpha-ribazole to generate adenosylcobalamin (Ado-cobalamin). Also synthesizes adenosylcobalamin 5'-phosphate from adenosylcobinamide-GDP and alpha-ribazole 5'-phosphate. The chain is Adenosylcobinamide-GDP ribazoletransferase from Stutzerimonas stutzeri (strain A1501) (Pseudomonas stutzeri).